A 76-amino-acid polypeptide reads, in one-letter code: Acyl carrier protein (76 aa).

In terms of domain architecture, Carrier spans 2–76 (SDIAERVKKI…QAIDYIQSHT (75 aa)). At S36 the chain carries O-(pantetheine 4'-phosphoryl)serine.

It belongs to the acyl carrier protein (ACP) family. Post-translationally, 4'-phosphopantetheine is transferred from CoA to a specific serine of apo-ACP by AcpS. This modification is essential for activity because fatty acids are bound in thioester linkage to the sulfhydryl of the prosthetic group.

The protein resides in the cytoplasm. Its pathway is lipid metabolism; fatty acid biosynthesis. Its function is as follows. Carrier of the growing fatty acid chain in fatty acid biosynthesis. The protein is Acyl carrier protein of Methylococcus capsulatus (strain ATCC 33009 / NCIMB 11132 / Bath).